Consider the following 531-residue polypeptide: Light-independent protochlorophyllide reductase subunit B (531 aa).

Asp36 lines the [4Fe-4S] cluster pocket. The active-site Proton donor is the Asp287. 422–423 provides a ligand contact to substrate; the sequence is GL.

It belongs to the ChlB/BchB/BchZ family. As to quaternary structure, protochlorophyllide reductase is composed of three subunits; BchL, BchN and BchB. Forms a heterotetramer of two BchB and two BchN subunits. The cofactor is [4Fe-4S] cluster.

The enzyme catalyses chlorophyllide a + oxidized 2[4Fe-4S]-[ferredoxin] + 2 ADP + 2 phosphate = protochlorophyllide a + reduced 2[4Fe-4S]-[ferredoxin] + 2 ATP + 2 H2O. Its pathway is porphyrin-containing compound metabolism; bacteriochlorophyll biosynthesis (light-independent). Its function is as follows. Component of the dark-operative protochlorophyllide reductase (DPOR) that uses Mg-ATP and reduced ferredoxin to reduce ring D of protochlorophyllide (Pchlide) to form chlorophyllide a (Chlide). This reaction is light-independent. The NB-protein (BchN-BchB) is the catalytic component of the complex. This Rhodopseudomonas palustris (strain BisA53) protein is Light-independent protochlorophyllide reductase subunit B.